A 206-amino-acid chain; its full sequence is CBS domain-containing protein CBSX3, mitochondrial (206 aa).

The N-terminal 39 residues, 1 to 39 (MQGVIRSFVSGGNVVKGSVLQHLRVINPAIQPSVFCSRS), are a transit peptide targeting the mitochondrion. CBS domains follow at residues 61-127 (MKSK…GRSS) and 136-194 (MTEE…HREE).

It localises to the mitochondrion. In Arabidopsis thaliana (Mouse-ear cress), this protein is CBS domain-containing protein CBSX3, mitochondrial (CBSX3).